We begin with the raw amino-acid sequence, 73 residues long: Mitofissin (73 aa).

It belongs to the ?ATG44? family. In terms of assembly, homooligomer. Found as homooctamer in solution, but binds to membranes either as a monomer, dimer, or tetramer, not as an octamer.

Its subcellular location is the mitochondrion intermembrane space. It is found in the vacuole. Mitochondrial fission factor that acts directly on lipid membranes to drive mitochondrial fission required for mitophagy. Directly binds to lipid membranes and brings about lipid membrane fragility to facilitate membrane fission and engulfment of mitochondria by the phagophore. In Saccharomyces cerevisiae (strain ATCC 204508 / S288c) (Baker's yeast), this protein is Mitofissin.